Here is a 760-residue protein sequence, read N- to C-terminus: Phosphatidylinositol N-acetylglucosaminyltransferase subunit Q (760 aa).

Transmembrane regions (helical) follow at residues 278 to 298 (TVAS…WLHG), 349 to 371 (LYHI…HILW), 378 to 400 (CLGL…FHIY), 446 to 468 (LFIG…LYYL), and 475 to 497 (LLVV…LPLY). Residues 696–748 (LAVGVEGPCQDEPPSPRHPLAPSAEQHPASGGLKQSLTPVPSGPGPSLPEPHG) form a disordered region.

The protein belongs to the PIGQ family. Component of the glycosylphosphatidylinositol-N-acetylglucosaminyltransferase (GPI-GnT) complex composed at least by PIGA, PIGC, PIGH, PIGP, PIGQ, PIGY and DPM2. Interacts with PIGA, PIGH and PIGC.

It localises to the membrane. The protein operates within glycolipid biosynthesis; glycosylphosphatidylinositol-anchor biosynthesis. In terms of biological role, part of the glycosylphosphatidylinositol-N-acetylglucosaminyltransferase (GPI-GnT) complex that catalyzes the transfer of N-acetylglucosamine from UDP-N-acetylglucosamine to phosphatidylinositol and participates in the first step of GPI biosynthesis. This is Phosphatidylinositol N-acetylglucosaminyltransferase subunit Q from Homo sapiens (Human).